We begin with the raw amino-acid sequence, 226 residues long: 8-oxoguanine DNA glycosylase/AP lyase (226 aa).

Active-site residues include Lys149 and Asp167.

Belongs to the type-2 OGG1 family.

It carries out the reaction 2'-deoxyribonucleotide-(2'-deoxyribose 5'-phosphate)-2'-deoxyribonucleotide-DNA = a 3'-end 2'-deoxyribonucleotide-(2,3-dehydro-2,3-deoxyribose 5'-phosphate)-DNA + a 5'-end 5'-phospho-2'-deoxyribonucleoside-DNA + H(+). Catalyzes the excision of an oxidatively damaged form of guanine (7,8-dihydro-8-oxoguanine = 8-oxoG) from DNA. Also cleaves the DNA backbone at apurinic/apyrimidinic sites (AP sites). This is 8-oxoguanine DNA glycosylase/AP lyase from Aquifex aeolicus (strain VF5).